Reading from the N-terminus, the 1639-residue chain is Peroxide stress-activated histidine kinase mak1 (1639 aa).

The segment covering 38–49 has biased composition (polar residues); it reads SFTNSQNSSVGS. The disordered stretch occupies residues 38–76; that stretch reads SFTNSQNSSVGSVHSPILESPTSLNRQHRNSFSFNNVSS. Residues 67-76 show a composition bias toward low complexity; sequence NSFSFNNVSS. One can recognise a PAS 1 domain in the interval 716 to 786; it reads PFPLLKVIID…NDWKSSLFSG (71 aa). The PAC 1 domain occupies 789 to 841; that stretch reads FYHEIRLQRFDNVYRYFICRAVPLRDCTGSVLHFFGTMTDVHDQKLAERELQK. The PAS 2 domain maps to 848–920; the sequence is NENSYRSLAE…ESLEGTFNNQ (73 aa). The PAC 2 domain maps to 929 to 982; it reads FAAEIRFRSTDGHYRWHLVKSVCVNNSADTSTNLWLGTCTDIHDHKMLEEKLQE. Residues 1000–1223 enclose the Histidine kinase domain; that stretch reads NMSHEIRTPL…RFMWTATFTM (224 aa). At histidine 1003 the chain carries Phosphohistidine; by autocatalysis. In terms of domain architecture, Response regulatory spans 1507–1629; that stretch reads SVLLAEDNII…HLSLIISGIL (123 aa). The residue at position 1559 (aspartate 1559) is a 4-aspartylphosphate.

The protein resides in the cytoplasm. The catalysed reaction is ATP + protein L-histidine = ADP + protein N-phospho-L-histidine.. Involved in the control of the SAPK-dependent transcriptional response to peroxide stress. Also has a role in G2/M regulation. This chain is Peroxide stress-activated histidine kinase mak1 (mak1), found in Schizosaccharomyces pombe (strain 972 / ATCC 24843) (Fission yeast).